We begin with the raw amino-acid sequence, 71 residues long: Small ribosomal subunit protein bS21 (71 aa).

Residues K48–K59 are compositionally biased toward basic residues. The segment at K48–Y71 is disordered. Residues V60–Y71 show a composition bias toward basic and acidic residues.

Belongs to the bacterial ribosomal protein bS21 family.

This is Small ribosomal subunit protein bS21 from Saccharophagus degradans (strain 2-40 / ATCC 43961 / DSM 17024).